The primary structure comprises 866 residues: Paramyosin (866 aa).

Residues 1–22 form a nonhelical region region; sequence MMNHDTESHVKISRTIYRGVSP. Residues 23-839 adopt a coiled-coil conformation; that stretch reads STTRLESRVR…AERTVTVRRV (817 aa). A nonhelical region region spans residues 840–866; that stretch reads GPGGRAVSVARELSVTSNRGMRATSMM.

Belongs to the paramyosin family. In terms of assembly, homodimer.

The protein resides in the cytoplasm. The protein localises to the myofibril. Its function is as follows. Paramyosin is a major structural component of many thick filaments isolated from invertebrate muscles. The polypeptide is Paramyosin (Schistosoma japonicum (Blood fluke)).